A 419-amino-acid polypeptide reads, in one-letter code: Imidazolonepropionase (419 aa).

The Fe(3+) site is built by His-87 and His-89. Residues His-87 and His-89 each contribute to the Zn(2+) site. Residues Arg-96, Tyr-159, and His-192 each contribute to the 4-imidazolone-5-propanoate site. Residue Tyr-159 coordinates N-formimidoyl-L-glutamate. His-257 contacts Fe(3+). Residue His-257 participates in Zn(2+) binding. Residue Gln-260 coordinates 4-imidazolone-5-propanoate. Asp-332 contacts Fe(3+). Asp-332 provides a ligand contact to Zn(2+). N-formimidoyl-L-glutamate is bound by residues Asn-334 and Gly-336. Residue Ser-337 coordinates 4-imidazolone-5-propanoate.

The protein belongs to the metallo-dependent hydrolases superfamily. HutI family. Zn(2+) serves as cofactor. Requires Fe(3+) as cofactor.

It is found in the cytoplasm. It carries out the reaction 4-imidazolone-5-propanoate + H2O = N-formimidoyl-L-glutamate. The protein operates within amino-acid degradation; L-histidine degradation into L-glutamate; N-formimidoyl-L-glutamate from L-histidine: step 3/3. Its function is as follows. Catalyzes the hydrolytic cleavage of the carbon-nitrogen bond in imidazolone-5-propanoate to yield N-formimidoyl-L-glutamate. It is the third step in the universal histidine degradation pathway. This Alteromonas mediterranea (strain DSM 17117 / CIP 110805 / LMG 28347 / Deep ecotype) protein is Imidazolonepropionase.